Reading from the N-terminus, the 107-residue chain is CLAVATA3/ESR (CLE)-related protein 13 (107 aa).

The first 25 residues, 1-25, serve as a signal peptide directing secretion; sequence MATTRVSHVLGFLLWISLLIFVSIG. Residue asparagine 29 is glycosylated (N-linked (GlcNAc...) asparagine). The segment at 79–107 is disordered; sequence ALPAGGSEIDPRYGVEKRLVPSGPNPLHH. A compositionally biased stretch (basic and acidic residues) spans 87–97; that stretch reads IDPRYGVEKRL. Residues proline 99 and proline 102 each carry the hydroxyproline modification. Proline 102 carries an O-linked (Ara...) hydroxyproline glycan.

The protein belongs to the CLV3/ESR signal peptide family. In terms of processing, the O-glycosylation (arabinosylation) of the hydroxyproline Pro-102 enhances binding affinity of the CLE13p peptide for its receptor. In terms of tissue distribution, mostly expressed in seedlings, roots, flowers, stems and apex, and, to a lower extent, in leaves and siliques.

Its subcellular location is the secreted. It is found in the extracellular space. Functionally, extracellular signal peptide that regulates cell fate. Represses root apical meristem maintenance. Regulates the transition of protophloem cells from proliferation to differentiation, thus impinging on postembryonic growth capacity of the root meristem; this signaling pathway requires CRN and CLV2. The protein is CLAVATA3/ESR (CLE)-related protein 13 of Arabidopsis thaliana (Mouse-ear cress).